We begin with the raw amino-acid sequence, 238 residues long: Sugar fermentation stimulation protein homolog (238 aa).

This sequence belongs to the SfsA family.

In Pseudoalteromonas translucida (strain TAC 125), this protein is Sugar fermentation stimulation protein homolog.